The chain runs to 567 residues: Allo-aromadendrene synthase TPS4FN (567 aa).

(2E,6E)-farnesyl diphosphate-binding residues include R282, D319, D323, R462, and D465. 2 residues coordinate Mg(2+): D319 and D323. Residues 319-323 (DDIYD) carry the DDXXD motif motif. Mg(2+)-binding residues include D465 and E473.

It belongs to the terpene synthase family. Tpsb subfamily. Mg(2+) is required as a cofactor. The cofactor is Mn(2+).

It catalyses the reaction (2E,6E)-farnesyl diphosphate = alpha-humulene + diphosphate. The catalysed reaction is (2E,6E)-farnesyl diphosphate = (+)-valencene + diphosphate. The enzyme catalyses (2E)-geranyl diphosphate = beta-myrcene + diphosphate. It carries out the reaction (2E,6E)-farnesyl diphosphate = allo-aromadendrene + diphosphate. It catalyses the reaction (2E,6E)-farnesyl diphosphate + H2O = palustrol + diphosphate. Its pathway is secondary metabolite biosynthesis; terpenoid biosynthesis. In terms of biological role, involved in sesquiterpene olefins biosynthesis, constituants of cannabinoids and terpenoids-rich resins. Catalyzes mainly the conversion of (2E)-farnesyl diphosphate to allo-aromadendrene, and also produces minor products such as alpha-humulene, valencene and palustrol. Can also use (2E)-geranyl diphosphate as substrate with low efficiency, producing minor amounts of myrcene. The polypeptide is Allo-aromadendrene synthase TPS4FN (Cannabis sativa (Hemp)).